The chain runs to 236 residues: UPF0173 metal-dependent hydrolase AZC_2841 (236 aa).

It belongs to the UPF0173 family.

The chain is UPF0173 metal-dependent hydrolase AZC_2841 from Azorhizobium caulinodans (strain ATCC 43989 / DSM 5975 / JCM 20966 / LMG 6465 / NBRC 14845 / NCIMB 13405 / ORS 571).